We begin with the raw amino-acid sequence, 98 residues long: Integration host factor subunit alpha (98 aa).

The disordered stretch occupies residues 54–74 (LRDKASRPGRNPKTGENIPVS).

This sequence belongs to the bacterial histone-like protein family. In terms of assembly, heterodimer of an alpha and a beta chain.

This protein is one of the two subunits of integration host factor, a specific DNA-binding protein that functions in genetic recombination as well as in transcriptional and translational control. This is Integration host factor subunit alpha from Actinobacillus succinogenes (strain ATCC 55618 / DSM 22257 / CCUG 43843 / 130Z).